We begin with the raw amino-acid sequence, 223 residues long: Methanol utilization control regulatory protein MoxX (223 aa).

Positions 16–133 (QILIVDDHPV…EICAAFTEVA (118 aa)) constitute a Response regulatory domain. The 66-residue stretch at 155 to 220 (PGTSAPRLTG…DLVVKGIRYF (66 aa)) folds into the HTH luxR-type domain. Positions 179–198 (YRDIADRACISYKTVSNVSL) form a DNA-binding region, H-T-H motif.

Phosphorylated by MoxY.

The protein localises to the cytoplasm. Its function is as follows. Member of the two-component regulatory system MoxY/MoxX probably involved in the regulation of the methanol dehydrogenase expression. This chain is Methanol utilization control regulatory protein MoxX (moxX), found in Paracoccus denitrificans.